Reading from the N-terminus, the 142-residue chain is Large ribosomal subunit protein uL11 (142 aa).

It belongs to the universal ribosomal protein uL11 family. As to quaternary structure, part of the ribosomal stalk of the 50S ribosomal subunit. Interacts with L10 and the large rRNA to form the base of the stalk. L10 forms an elongated spine to which L12 dimers bind in a sequential fashion forming a multimeric L10(L12)X complex. One or more lysine residues are methylated.

Functionally, forms part of the ribosomal stalk which helps the ribosome interact with GTP-bound translation factors. This is Large ribosomal subunit protein uL11 from Acinetobacter baylyi (strain ATCC 33305 / BD413 / ADP1).